A 383-amino-acid chain; its full sequence is Succinyl-diaminopimelate desuccinylase (383 aa).

A Zn(2+)-binding site is contributed by His-73. Residue Asp-75 is part of the active site. Position 107 (Asp-107) interacts with Zn(2+). The Proton acceptor role is filled by Glu-141. Zn(2+) contacts are provided by Glu-142, Glu-170, and His-356.

The protein belongs to the peptidase M20A family. DapE subfamily. Homodimer. Zn(2+) serves as cofactor. It depends on Co(2+) as a cofactor.

The enzyme catalyses N-succinyl-(2S,6S)-2,6-diaminopimelate + H2O = (2S,6S)-2,6-diaminopimelate + succinate. It functions in the pathway amino-acid biosynthesis; L-lysine biosynthesis via DAP pathway; LL-2,6-diaminopimelate from (S)-tetrahydrodipicolinate (succinylase route): step 3/3. Functionally, catalyzes the hydrolysis of N-succinyl-L,L-diaminopimelic acid (SDAP), forming succinate and LL-2,6-diaminopimelate (DAP), an intermediate involved in the bacterial biosynthesis of lysine and meso-diaminopimelic acid, an essential component of bacterial cell walls. In Pseudomonas fluorescens (strain ATCC BAA-477 / NRRL B-23932 / Pf-5), this protein is Succinyl-diaminopimelate desuccinylase.